We begin with the raw amino-acid sequence, 926 residues long: OTU domain-containing protein 7A (926 aa).

The residue at position 121 (Ser-121) is a Phosphoserine. The interval 170 to 413 is TRAF-binding; that stretch reads ERDLIEQATM…AVDPGKDWEW (244 aa). The catalytic stretch occupies residues 185 to 452; it reads AGRLNWWSTV…VTWIRIPSET (268 aa). Positions 201–377 constitute an OTU domain; the sequence is LLPLATTGDG…QAHFSALVSM (177 aa). The active site involves Asp-209. The active-site Nucleophile is Cys-212. Catalysis depends on His-370, which acts as the Proton acceptor. Disordered stretches follow at residues 455 to 517, 540 to 615, and 671 to 779; these read PLAQ…DSVA, GLVH…GDAW, and EQEQ…ARQS. Residues 484–494 are compositionally biased toward low complexity; the sequence is VCSNSNSNNGK. Residues 495–513 are compositionally biased toward basic and acidic residues; the sequence is NGKDKEKEKQRKDKDKTRA. The Nuclear localization signal motif lies at 497–512; it reads KDKEKEKQRKDKDKTR. Low complexity-rich tracts occupy residues 579 to 595, 680 to 691, and 731 to 750; these read GASASTSPSEKTTPSPT, AAAAAAATATAT, and SPGTGASARAARAAGGAASP. Residues 751–767 are compositionally biased toward gly residues; that stretch reads GPGGGARRAAPGTGGPT. Position 880 is an omega-N-methylarginine (Arg-880). Residues 884–919 form an A20-type zinc finger; the sequence is GPAQRRCQRENCAFYGRAETEHFCSYCYREELRRRR. Zn(2+)-binding residues include Cys-890, Cys-895, Cys-907, and Cys-910.

Belongs to the peptidase C64 family.

Its subcellular location is the cytoplasm. The protein localises to the nucleus. It catalyses the reaction Thiol-dependent hydrolysis of ester, thioester, amide, peptide and isopeptide bonds formed by the C-terminal Gly of ubiquitin (a 76-residue protein attached to proteins as an intracellular targeting signal).. Deubiquitinase, which cleaves 'Lys-11'-linked polyubiquitin chains. The polypeptide is OTU domain-containing protein 7A (Otud7a) (Mus musculus (Mouse)).